Consider the following 311-residue polypeptide: Heme A synthase (311 aa).

Residues 1–6 (MQRFIK) lie on the Cytoplasmic side of the membrane. The chain crosses the membrane as a helical span at residues 7 to 27 (WLAVITSLDLLIVLLGGALVT). Over 28 to 62 (KTGSGQGCGKSWPLCNGEFVPSNLSMETIIELSHR) the chain is Extracellular. Cys-35 and Cys-42 are joined by a disulfide. Residue Glu-58 is part of the active site. A heme o-binding site is contributed by His-61. Residues 63 to 83 (LTSGSAGILVTLLCILSWKYY) traverse the membrane as a helical segment. Topologically, residues 84 to 91 (KHVRETKT) are cytoplasmic. The chain crosses the membrane as a helical span at residues 92 to 112 (LAILSFVFLVAQALMGAAAVV). Residues 113–121 (WGQMPAVLA) are Extracellular-facing. The chain crosses the membrane as a helical span at residues 122 to 142 (IHFGISLISFASVILLTCLIF). His-123 is a binding site for heme o. The Cytoplasmic portion of the chain corresponds to 143–159 (EIDQKFDARSLIMDKKM). Residues 160–180 (KFHIYGVTIYSYIVVYTGALV) form a helical membrane-spanning segment. Residues 181 to 211 (RHERASLACPDFPLCSKNRPMPTQLHEWVQM) lie on the Extracellular side of the membrane. Residues Cys-189 and Cys-195 are joined by a disulfide bond. The chain crosses the membrane as a helical span at residues 212 to 232 (GHRVAAMLIFAWILYAMILAI). A heme b-binding site is contributed by His-213. The Cytoplasmic portion of the chain corresponds to 233-243 (RHYKQQPVVYW). The chain crosses the membrane as a helical span at residues 244 to 264 (GWIISFILVTLQAIVGILVVF). Over 265–271 (TNASLSM) the chain is Extracellular. A helical membrane pass occupies residues 272 to 292 (ALLHSLFISCLFAVLCYLVML). His-275 is a binding site for heme b. Topologically, residues 293 to 311 (GTRSKVNAKEAASISKQTK) are cytoplasmic.

Belongs to the COX15/CtaA family. Type 1 subfamily. In terms of assembly, interacts with CtaB. It depends on heme b as a cofactor.

It localises to the cell membrane. It carries out the reaction Fe(II)-heme o + 2 A + H2O = Fe(II)-heme a + 2 AH2. It functions in the pathway porphyrin-containing compound metabolism; heme A biosynthesis; heme A from heme O: step 1/1. Catalyzes the conversion of heme O to heme A by two successive hydroxylations of the methyl group at C8. The first hydroxylation forms heme I, the second hydroxylation results in an unstable dihydroxymethyl group, which spontaneously dehydrates, resulting in the formyl group of heme A. This chain is Heme A synthase, found in Bacillus cereus (strain AH187).